Consider the following 149-residue polypeptide: Alpha-crystallin A chain (149 aa).

The sHSP domain occupies Leu41–Pro149. Zn(2+)-binding residues include His89, Glu91, His96, and His143.

Belongs to the small heat shock protein (HSP20) family. As to quaternary structure, heteropolymer composed of three CRYAA and one CRYAB subunits. Inter-subunit bridging via zinc ions enhances stability, which is crucial as there is no protein turn over in the lens. Can also form homodimers and homotetramers (dimers of dimers) which serve as the building blocks of homooligomers. Within homooligomers, the zinc-binding motif is created from residues of 3 different molecules. His-89 and Glu-91 from one molecule are ligands of the zinc ion, and His-96 and His-143 residues from additional molecules complete the site with tetrahedral coordination geometry.

The protein localises to the cytoplasm. The protein resides in the nucleus. Functionally, contributes to the transparency and refractive index of the lens. May act as a chaperone, preventing aggregation of various proteins under a wide range of stress conditions. This chain is Alpha-crystallin A chain (CRYAA), found in Anas platyrhynchos (Mallard).